The following is a 594-amino-acid chain: Arginine--tRNA ligase (594 aa).

The short motif at 133–143 (ANPTGPMNIVS) is the 'HIGH' region element.

The protein belongs to the class-I aminoacyl-tRNA synthetase family. In terms of assembly, monomer.

It localises to the cytoplasm. It catalyses the reaction tRNA(Arg) + L-arginine + ATP = L-arginyl-tRNA(Arg) + AMP + diphosphate. The chain is Arginine--tRNA ligase from Leptospira biflexa serovar Patoc (strain Patoc 1 / Ames).